We begin with the raw amino-acid sequence, 336 residues long: MSRVTLSRYLIEQTRSNNTPADLRFLIEVVARACKEISHHVSKGALGGVLGSMGTENVQGEVQKKLDVISNDILLEANEWGGHLAGMASEEMDNAYQIPGRYPKGAYLLVFDPLDGSSNIDVNVSVGTIFSVLRCPNEYLSQNETLNENAFLQPGTEQVAAGYAIYGPQTMLILTLGNGVKGFTLDRELGSFVLTHENIQVPATTAEFAINMSNQRHWEAPVQRYVGELLAGETGPLKKNYNMRWIASMVADVHRILTRGGLFMYPRDAREPSKPGKLRLMYEANPMSFIIEQAGGASTNGYERILDIKPESLHQRVSVILGSKEEVERVTAYHKE.

Positions 90, 112, 114, and 115 each coordinate Mg(2+). Substrate-binding positions include 115 to 118, Asn211, and Lys277; that span reads DGSS. A Mg(2+)-binding site is contributed by Glu283.

This sequence belongs to the FBPase class 1 family. In terms of assembly, homotetramer. The cofactor is Mg(2+).

Its subcellular location is the cytoplasm. It catalyses the reaction beta-D-fructose 1,6-bisphosphate + H2O = beta-D-fructose 6-phosphate + phosphate. It functions in the pathway carbohydrate biosynthesis; gluconeogenesis. This is Fructose-1,6-bisphosphatase class 1 from Pseudomonas putida (strain W619).